A 506-amino-acid polypeptide reads, in one-letter code: Glutamate--tRNA ligase (506 aa).

The short motif at 24-34 (PSPTGTPHVGL) is the 'HIGH' region element. The tract at residues 124–147 (TPEEVEQRHRAKGEDPKRGYDNYD) is disordered. Positions 128–147 (VEQRHRAKGEDPKRGYDNYD) are enriched in basic and acidic residues. The 'KMSKS' region signature appears at 268–272 (KLSKR). Position 271 (K271) interacts with ATP.

This sequence belongs to the class-I aminoacyl-tRNA synthetase family. Glutamate--tRNA ligase type 1 subfamily. Monomer.

The protein localises to the cytoplasm. It carries out the reaction tRNA(Glu) + L-glutamate + ATP = L-glutamyl-tRNA(Glu) + AMP + diphosphate. Functionally, catalyzes the attachment of glutamate to tRNA(Glu) in a two-step reaction: glutamate is first activated by ATP to form Glu-AMP and then transferred to the acceptor end of tRNA(Glu). This Kocuria rhizophila (strain ATCC 9341 / DSM 348 / NBRC 103217 / DC2201) protein is Glutamate--tRNA ligase.